The primary structure comprises 468 residues: MTKTLPKDFIFGGATAAYQAEGATHTDGKGPVAWDKYLEDNYWYTAEPASDFYNRYPVDLKLSEEFGVNGIRISIAWSRIFPTGKGEVNPKGVEYYHNLFAECHKRHVEPFVTLHHFDTPEALHSDGDFLNRENIEHFVNYAEFCFKEFSEVNYWTTFNEIGPIGDGQYLVGKFPPGIQYDLAKVFQSHHNMMVSHARAVKLFKDSGYSGEIGVVHALPTKYPFDANNPDDVRAAELEDIIHNKFILDATYLGKYSDKTMEGVNHILEVNGGELDLREEDFVALDAAKDLNDFLGINYYMSDWMQAFDGETEIIHNGKGEKGSSKYQIKGVGRRKAPVDAPKTDWDWIIFPQGLYDQIMRVKADYPNYKKIYITENGLGYKDEFVDKTVYDDGRIDYVKKHLEVISDAISDGANVKGYFMWSLMDVFSWSNGYEKRYGLFYVDFETQERYPKKSAYWYKKVAETQVIE.

The D-galactose 6-phosphate site is built by Gln19, His116, Asn159, Glu160, and Asn297. Residue Glu160 is the Proton donor of the active site. Glu375 acts as the Nucleophile in catalysis. Residues Ser428, Trp429, Lys435, and Tyr437 each coordinate D-galactose 6-phosphate.

This sequence belongs to the glycosyl hydrolase 1 family.

The enzyme catalyses a 6-phospho-beta-D-galactoside + H2O = D-galactose 6-phosphate + an alcohol. It functions in the pathway carbohydrate metabolism; lactose degradation; D-galactose 6-phosphate and beta-D-glucose from lactose 6-phosphate: step 1/1. This chain is 6-phospho-beta-galactosidase, found in Streptococcus pyogenes serotype M5 (strain Manfredo).